The sequence spans 510 residues: Fumarate hydratase, mitochondrial (510 aa).

Residues 1-44 (MYRALRLLARSRPLVRAPAAALASAPGLGGAAVPSFWPPNAARM) constitute a mitochondrion transit peptide. N6-acetyllysine; alternate occurs at positions 61, 66, and 80. 3 positions are modified to N6-succinyllysine; alternate: Lys-61, Lys-66, and Lys-80. Residues Thr-85 and Thr-90 each carry the phosphothreonine modification. An N6-acetyllysine modification is found at Lys-94. 2 positions are modified to N6-acetyllysine; alternate: Lys-115 and Lys-122. N6-succinyllysine; alternate occurs at positions 115 and 122. Residues 145 to 147 (SGT), 176 to 179 (HPND), and 186 to 188 (SSN) contribute to the substrate site. Lys-213 is modified (N6-acetyllysine). Lys-223 carries the N6-acetyllysine; alternate modification. N6-succinyllysine; alternate is present on Lys-223. Substrate is bound at residue Thr-234. The Proton donor/acceptor role is filled by His-235. Phosphothreonine; by PRKDC is present on Thr-236. Lys-256 is modified (N6-acetyllysine). Position 292 is an N6-acetyllysine; alternate (Lys-292). Lys-292 carries the post-translational modification N6-succinyllysine; alternate. The active site involves Ser-365. Substrate contacts are provided by residues Ser-366 and 371–373 (KVN). Position 366 is a phosphoserine (Ser-366). An N6-succinyllysine mark is found at Lys-467 and Lys-473. An N6-acetyllysine modification is found at Lys-502.

The protein belongs to the class-II fumarase/aspartase family. Fumarase subfamily. Homotetramer. Interacts with H2AZ1. In terms of processing, phosphorylation at Thr-236 by PRKDC in response to DNA damage promotes translocation to the nucleus and recruitment to DNA double-strand breaks (DSBs). In terms of tissue distribution, expressed in red blood cells; underexpressed in red blood cells (cytoplasm) of patients with hereditary non-spherocytic hemolytic anemia of unknown etiology.

The protein localises to the mitochondrion. It localises to the cytoplasm. It is found in the cytosol. The protein resides in the nucleus. Its subcellular location is the chromosome. The catalysed reaction is (S)-malate = fumarate + H2O. Its pathway is carbohydrate metabolism; tricarboxylic acid cycle; (S)-malate from fumarate: step 1/1. Functionally, catalyzes the reversible stereospecific interconversion of fumarate to L-malate. Experiments in other species have demonstrated that specific isoforms of this protein act in defined pathways and favor one direction over the other. In terms of biological role, catalyzes the hydration of fumarate to L-malate in the tricarboxylic acid (TCA) cycle to facilitate a transition step in the production of energy in the form of NADH. Catalyzes the dehydration of L-malate to fumarate. Fumarate metabolism in the cytosol plays a role during urea cycle and arginine metabolism; fumarate being a by-product of the urea cycle and amino-acid catabolism. Also plays a role in DNA repair by promoting non-homologous end-joining (NHEJ). In response to DNA damage and phosphorylation by PRKDC, translocates to the nucleus and accumulates at DNA double-strand breaks (DSBs): acts by catalyzing formation of fumarate, an inhibitor of KDM2B histone demethylase activity, resulting in enhanced dimethylation of histone H3 'Lys-36' (H3K36me2). This Homo sapiens (Human) protein is Fumarate hydratase, mitochondrial.